Here is a 115-residue protein sequence, read N- to C-terminus: Con-Ins T1B (115 aa).

The N-terminal stretch at 1–24 (MTTSFYFLLMALGLLLYVCQSSFG) is a signal peptide. A propeptide spanning residues 25–29 (NQHTR) is cleaved from the precursor. At Pro34 the chain carries 4-hydroxyproline; partial. 3 disulfide bridges follow: Cys38–Cys101, Cys50–Cys114, and Cys100–Cys105. A propeptide spans 52-94 (RKRNDAGKKRGQASPLWQRGGSLSMLKARAKRNEAFHLQRAHR) (c peptide). Glu98 carries the 4-carboxyglutamate modification. Pro104 carries the post-translational modification 4-hydroxyproline; partial. Residue Glu109 is modified to 4-carboxyglutamate; partial. Residue Cys114 is modified to Cysteine amide.

Belongs to the insulin family. As to quaternary structure, heterodimer of A and B chains; disulfide-linked. In terms of tissue distribution, expressed by the venom gland.

The protein localises to the secreted. In terms of biological role, this venom insulin, from a fish-hunting cone snail, facilitates prey capture by rapidly inducing hypoglycemic shock. It is one of the smallest known insulin found in nature and lacks the C-terminal segment of the B chain that, in human insulin, mediates engagement of the insulin receptor (INSR) and assembly of the hormone's hexameric storage form. Despite lacking this segment, it both binds and activates human insulin receptor (long isoform (HIR-B) of INSR) with a high potency (EC(50)=12.0 nM). In vivo, intraperitoneal injection of this peptide into zebrafish lowers blood glucose with a lower potency than human insulin. In addition, when applied to water, this peptide reduces overall locomotor activity of zebrafish larvae, observed as a significant decrease in the percentage of time spent swimming and movement frequency. When tested on a mouse model of diabetes, this insulin also lowers blood glucose with a 10-fold lower potency than human insulin. In Conus tulipa (Fish-hunting cone snail), this protein is Con-Ins T1B.